We begin with the raw amino-acid sequence, 407 residues long: Arginine biosynthesis bifunctional protein ArgJ (407 aa).

Residues Thr-157, Lys-183, Thr-194, Glu-280, Asn-402, and Thr-407 each contribute to the substrate site. The Nucleophile role is filled by Thr-194.

It belongs to the ArgJ family. Heterotetramer of two alpha and two beta chains.

It is found in the cytoplasm. It catalyses the reaction N(2)-acetyl-L-ornithine + L-glutamate = N-acetyl-L-glutamate + L-ornithine. It carries out the reaction L-glutamate + acetyl-CoA = N-acetyl-L-glutamate + CoA + H(+). The protein operates within amino-acid biosynthesis; L-arginine biosynthesis; L-ornithine and N-acetyl-L-glutamate from L-glutamate and N(2)-acetyl-L-ornithine (cyclic): step 1/1. Its pathway is amino-acid biosynthesis; L-arginine biosynthesis; N(2)-acetyl-L-ornithine from L-glutamate: step 1/4. Functionally, catalyzes two activities which are involved in the cyclic version of arginine biosynthesis: the synthesis of N-acetylglutamate from glutamate and acetyl-CoA as the acetyl donor, and of ornithine by transacetylation between N(2)-acetylornithine and glutamate. This Bacillus anthracis protein is Arginine biosynthesis bifunctional protein ArgJ.